A 209-amino-acid chain; its full sequence is Outer-membrane lipoprotein LolB (209 aa).

The signal sequence occupies residues 1 to 17 (MKKSTLLFSLMAMALSG). The N-palmitoyl cysteine moiety is linked to residue Cys-18. The S-diacylglycerol cysteine moiety is linked to residue Cys-18.

This sequence belongs to the LolB family. Monomer.

It is found in the cell outer membrane. Plays a critical role in the incorporation of lipoproteins in the outer membrane after they are released by the LolA protein. This Haemophilus ducreyi (strain 35000HP / ATCC 700724) protein is Outer-membrane lipoprotein LolB.